Reading from the N-terminus, the 434-residue chain is Probable carboxypeptidase BDBG_01803 (434 aa).

Residues 1–20 (MKLSHLAAALSAQLVAPVAA) form the signal peptide. Residues asparagine 35, asparagine 136, and asparagine 150 are each glycosylated (N-linked (GlcNAc...) asparagine). Aspartate 160 contributes to the Zn(2+) binding site. Glutamate 192 serves as the catalytic Proton acceptor. Residue glutamate 193 participates in Zn(2+) binding. N-linked (GlcNAc...) asparagine glycosylation occurs at asparagine 343.

The protein belongs to the peptidase M20A family. Zn(2+) serves as cofactor.

The protein resides in the secreted. This Blastomyces gilchristii (strain SLH14081) (Blastomyces dermatitidis) protein is Probable carboxypeptidase BDBG_01803.